A 232-amino-acid polypeptide reads, in one-letter code: Phosphate-specific transport system accessory protein PhoU homolog 1 (232 aa).

It belongs to the PhoU family. In terms of assembly, homodimer.

The protein resides in the cytoplasm. Its function is as follows. Plays a role in the regulation of phosphate uptake. The protein is Phosphate-specific transport system accessory protein PhoU homolog 1 (phoU1) of Thermotoga maritima (strain ATCC 43589 / DSM 3109 / JCM 10099 / NBRC 100826 / MSB8).